Reading from the N-terminus, the 702-residue chain is Ribosomal RNA large subunit methyltransferase K/L (702 aa).

Residues 43 to 154 form the THUMP domain; it reads LVYQSLMWSR…KETASIALDL (112 aa).

The protein belongs to the methyltransferase superfamily. RlmKL family.

The protein resides in the cytoplasm. The enzyme catalyses guanosine(2445) in 23S rRNA + S-adenosyl-L-methionine = N(2)-methylguanosine(2445) in 23S rRNA + S-adenosyl-L-homocysteine + H(+). It catalyses the reaction guanosine(2069) in 23S rRNA + S-adenosyl-L-methionine = N(2)-methylguanosine(2069) in 23S rRNA + S-adenosyl-L-homocysteine + H(+). Specifically methylates the guanine in position 2445 (m2G2445) and the guanine in position 2069 (m7G2069) of 23S rRNA. This chain is Ribosomal RNA large subunit methyltransferase K/L, found in Escherichia coli O6:H1 (strain CFT073 / ATCC 700928 / UPEC).